Reading from the N-terminus, the 140-residue chain is VapC ribonuclease Y4jK (140 aa).

The 134-residue stretch at 2 to 135 (IVLDTNVISE…FEAAGLDIIN (134 aa)) folds into the PINc domain. Residues Asp5 and Asp104 each coordinate Mg(2+).

Belongs to the PINc/VapC protein family. Mg(2+) serves as cofactor.

In terms of biological role, toxic component of a type II toxin-antitoxin (TA) system. An RNase. Involved in plasmid stability. The protein is VapC ribonuclease Y4jK of Sinorhizobium fredii (strain NBRC 101917 / NGR234).